An 85-amino-acid polypeptide reads, in one-letter code: Protein Vpu (85 aa).

The Extracellular segment spans residues 1 to 7 (MHQENLL). The helical transmembrane segment at 8–28 (ALIALSALCLINVLIWLFNLR) threads the bilayer. Residues 29 to 85 (IYLVQRKQDRREQEILERLRRIKEIRDDSDYESNEEEQQEVMELIHSHGFANPMFEL) are Cytoplasmic-facing.

This sequence belongs to the HIV-1 VPU protein family. As to quaternary structure, homopentamer. Interacts with host CD4 and BRTC; these interactions induce proteasomal degradation of CD4. Interacts with host BST2; this interaction leads to the degradation of host BST2. Interacts with host FBXW11. Interacts with host AP1M1; this interaction plays a role in the mistrafficking and subsequent degradation of host BST2. Interacts with host RANBP2; this interaction allows Vpu to down-regulate host BLM sumoylation. Post-translationally, phosphorylated by host CK2. This phosphorylation is necessary for interaction with human BTRC and degradation of CD4.

The protein resides in the host membrane. Ion channel activity is inhibited by hexamethylene amiloride in vitro. Enhances virion budding by targeting host CD4 and Tetherin/BST2 to proteasome degradation. Degradation of CD4 prevents any unwanted premature interactions between viral Env and its host receptor CD4 in the endoplasmic reticulum. Degradation of antiretroviral protein Tetherin/BST2 is important for virion budding, as BST2 tethers new viral particles to the host cell membrane. Mechanistically, Vpu bridges either CD4 or BST2 to BTRC, a substrate recognition subunit of the Skp1/Cullin/F-box protein E3 ubiquitin ligase, induces their ubiquitination and subsequent proteasomal degradation. The alteration of the E3 ligase specificity by Vpu seems to promote the degradation of host IKBKB, leading to NF-kappa-B down-regulation and subsequent apoptosis. Acts as a viroporin that forms an oligomeric ion channel in membranes. Modulates the host DNA repair mechanisms to promote degradation of nuclear viral cDNA in cells that are already productively infected in order to suppress immune sensing and proviral hyper-integration (superinfection). Manipulates PML-NBs and modulates SUMOylation of host BLM protein thereby enhancing its DNA-end processing activity toward viral unintegrated linear DNA. Also inhibits RAD52-mediated homologous repair of viral cDNA, preventing the generation of dead-end circular forms of single copies of the long terminal repeat and permitting sustained nucleolytic attack. The sequence is that of Protein Vpu from Human immunodeficiency virus type 1 group O (isolate MVP5180) (HIV-1).